A 310-amino-acid chain; its full sequence is Vomeronasal type-1 receptor 44 (310 aa).

Residues 1 to 20 (MNKANLLHIDTNIKITLLAE) are Extracellular-facing. A helical membrane pass occupies residues 21–41 (VSVGISANSILFIAYLCMLLG). Over 42 to 50 (ENRHKPIDL) the chain is Cytoplasmic. The chain crosses the membrane as a helical span at residues 51–71 (YIAFLSLTQLMLLITMGLIAV). Residues 72 to 93 (DMFMPWGRWDSTTCQSLIYLHR) lie on the Extracellular side of the membrane. The cysteines at positions 85 and 172 are disulfide-linked. A helical membrane pass occupies residues 94–114 (FLRGLTLCATCLLNVLWTITL). Residues 115 to 131 (SSRNSCLAKFKHKYPHH) lie on the Cytoplasmic side of the membrane. The helical transmembrane segment at 132–152 (ISGAFLFLCVLYMSFSSHFLV) threads the bilayer. The Extracellular segment spans residues 153–190 (SMTVTPNLTSENFMYVTQSCSLLPMSYSRTSMFSTPVA). N159 is a glycosylation site (N-linked (GlcNAc...) asparagine). A helical transmembrane segment spans residues 191–211 (IRETFLISLMALSSGYMVALL). Residues 212–238 (WRHKKQAQHLRSTSLSSKASPEQRATR) are Cytoplasmic-facing. Residues 239–259 (TILLLMSFFVVFYILDTVIFH) traverse the membrane as a helical segment. Residues 260–268 (SRMKFKDGS) lie on the Extracellular side of the membrane. Residues 269–289 (ILYCFQIIVSHSYVTVSPFVF) form a helical membrane-spanning segment. At 290–310 (ICTEKHIIKFLRSMCGRIANI) the chain is on the cytoplasmic side.

The protein belongs to the G-protein coupled receptor 1 family.

The protein localises to the cell membrane. Functionally, putative pheromone receptor implicated in the regulation of social and reproductive behavior. This chain is Vomeronasal type-1 receptor 44 (Vmn1r44), found in Mus musculus (Mouse).